Here is a 248-residue protein sequence, read N- to C-terminus: D-xylose 1-dehydrogenase (248 aa).

The NAD(+) site is built by aspartate 42, aspartate 68, asparagine 91, tyrosine 156, lysine 160, valine 189, and threonine 191. The active-site Proton acceptor is the tyrosine 156.

Belongs to the short-chain dehydrogenases/reductases (SDR) family.

The catalysed reaction is D-xylose + NAD(+) = D-xylono-1,5-lactone + NADH + H(+). Involved in the degradation of D-xylose. Catalyzes the initial reaction in the xylose utilization pathway by oxydizing D-xylose into D-xylonolactone. Shows some activity with L-arabinose and D-lyxose, but D-xylose is clearly the best substrate. Has no activity with D-ribose, D-glucose, D-galactose or D-mannose. This Caulobacter vibrioides (strain ATCC 19089 / CIP 103742 / CB 15) (Caulobacter crescentus) protein is D-xylose 1-dehydrogenase.